The primary structure comprises 48 residues: ATP synthase protein 8 (48 aa).

A helical membrane pass occupies residues 13 to 33 (LTYGFLLLIILLVLFSQFLLP).

The protein belongs to the ATPase protein 8 family. In terms of assembly, F-type ATPases have 2 components, CF(1) - the catalytic core - and CF(0) - the membrane proton channel.

The protein localises to the mitochondrion membrane. In terms of biological role, mitochondrial membrane ATP synthase (F(1)F(0) ATP synthase or Complex V) produces ATP from ADP in the presence of a proton gradient across the membrane which is generated by electron transport complexes of the respiratory chain. F-type ATPases consist of two structural domains, F(1) - containing the extramembraneous catalytic core and F(0) - containing the membrane proton channel, linked together by a central stalk and a peripheral stalk. During catalysis, ATP synthesis in the catalytic domain of F(1) is coupled via a rotary mechanism of the central stalk subunits to proton translocation. Part of the complex F(0) domain. Minor subunit located with subunit a in the membrane. This chain is ATP synthase protein 8 (ATP8), found in Wickerhamomyces canadensis (Yeast).